Consider the following 115-residue polypeptide: Small ribosomal subunit protein bS16 (115 aa).

The segment at 81–115 (GLAPKPTYNEQPKKSAPKAKAQERAKAAADAAAAA) is disordered.

It belongs to the bacterial ribosomal protein bS16 family.

This is Small ribosomal subunit protein bS16 from Gluconobacter oxydans (strain 621H) (Gluconobacter suboxydans).